The following is a 134-amino-acid chain: Arsenate reductase (134 aa).

Active-site nucleophile residues include cysteine 11, cysteine 83, and cysteine 90. Disulfide bonds link cysteine 11–cysteine 83 and cysteine 83–cysteine 90.

The protein belongs to the low molecular weight phosphotyrosine protein phosphatase family. Thioredoxin-coupled ArsC subfamily.

It localises to the cytoplasm. It carries out the reaction arsenate + [thioredoxin]-dithiol + H(+) = arsenite + [thioredoxin]-disulfide + H2O. In terms of biological role, catalyzes the reduction of arsenate [As(V)] to arsenite [As(III)]. The chain is Arsenate reductase from Bacillus cereus (strain ZK / E33L).